A 238-amino-acid polypeptide reads, in one-letter code: uncharacterized protein (238 aa).

This sequence belongs to the HyuE racemase family.

This is an uncharacterized protein from Schizosaccharomyces pombe (strain 972 / ATCC 24843) (Fission yeast).